A 162-amino-acid chain; its full sequence is Precursor protein UG (162 aa).

An N-terminal signal peptide occupies residues 1–19 (MERILLCFIVATLVAISMA). Positions 20 to 23 (NPRP) are excised as a propeptide. 2 cysteine pairs are disulfide-bonded: C30-C42 and C33-C49. The propeptide occupies 56–59 (VPKP). Intrachain disulfides connect C66–C78 and C69–C85. A propeptide spanning residues 92 to 95 (VPKP) is cleaved from the precursor. Intrachain disulfides connect C102-C114 and C105-C121. Residues 128-131 (VPKP) constitute a propeptide that is removed on maturation. Cystine bridges form between C138–C150 and C141–C157.

It belongs to the sea anemone BBH family.

The protein localises to the secreted. The protein resides in the nematocyst. Affects the ASIC3 channel (ACCN3) and produces analgesic effects. It produces a reversible inhibition effect on both the transient and the sustained current of human ASIC3 channels expressed in X.laevis oocytes. It completely blocks the transient component (IC(50)=10 uM) and partially (48%) inhibits the amplitude of the sustained component (IC(50)=1.44 uM). Using in vivo tests in mice, it reverses inflammatory and acid-induced pain. Its function is as follows. Does not affect the ASIC3 channel. Does not cause lethality or paralysis of noble crayfish (A.astacus) at a dose of 1 mg/kg. The sequence is that of Precursor protein UG from Urticina grebelnyi (Painted anemone).